A 355-amino-acid polypeptide reads, in one-letter code: tRNA uridine(34) hydroxylase (355 aa).

Positions 146 to 240 (KDPDALFVDM…YVRTAKKKDL (95 aa)) constitute a Rhodanese domain. Catalysis depends on cysteine 200, which acts as the Cysteine persulfide intermediate.

It belongs to the TrhO family.

The enzyme catalyses uridine(34) in tRNA + AH2 + O2 = 5-hydroxyuridine(34) in tRNA + A + H2O. In terms of biological role, catalyzes oxygen-dependent 5-hydroxyuridine (ho5U) modification at position 34 in tRNAs. The protein is tRNA uridine(34) hydroxylase of Hamiltonella defensa subsp. Acyrthosiphon pisum (strain 5AT).